The following is a 367-amino-acid chain: Phosphoribosylformylglycinamidine cyclo-ligase (367 aa).

The protein belongs to the AIR synthase family.

It localises to the cytoplasm. It carries out the reaction 2-formamido-N(1)-(5-O-phospho-beta-D-ribosyl)acetamidine + ATP = 5-amino-1-(5-phospho-beta-D-ribosyl)imidazole + ADP + phosphate + H(+). It functions in the pathway purine metabolism; IMP biosynthesis via de novo pathway; 5-amino-1-(5-phospho-D-ribosyl)imidazole from N(2)-formyl-N(1)-(5-phospho-D-ribosyl)glycinamide: step 2/2. The chain is Phosphoribosylformylglycinamidine cyclo-ligase from Cyanothece sp. (strain PCC 7425 / ATCC 29141).